The following is a 425-amino-acid chain: RNA polymerase sigma factor SigA (425 aa).

Positions 193–263 (MVQSNLRLVV…TRAIADQSRT (71 aa)) are sigma-70 factor domain-2. Positions 217–220 (DLIQ) match the Interaction with polymerase core subunit RpoC motif. Residues 272–347 (ETISRIKKTT…EADGETPEDE (76 aa)) are sigma-70 factor domain-3. The tract at residues 360-413 (VLDTLSPRERDVLRLRYGLDDGRMKTLEEIGQIFNVTRERIRQIEAKALRKLRH) is sigma-70 factor domain-4. A DNA-binding region (H-T-H motif) is located at residues 386-405 (LEEIGQIFNVTRERIRQIEA).

Belongs to the sigma-70 factor family. RpoD/SigA subfamily. In terms of assembly, interacts transiently with the RNA polymerase catalytic core.

Its subcellular location is the cytoplasm. Functionally, sigma factors are initiation factors that promote the attachment of RNA polymerase to specific initiation sites and are then released. This sigma factor is the primary sigma factor during exponential growth. In Synechocystis sp. (strain ATCC 27184 / PCC 6803 / Kazusa), this protein is RNA polymerase sigma factor SigA.